We begin with the raw amino-acid sequence, 150 residues long: Large ribosomal subunit protein uL13 (150 aa).

The protein belongs to the universal ribosomal protein uL13 family. In terms of assembly, part of the 50S ribosomal subunit.

Its function is as follows. This protein is one of the early assembly proteins of the 50S ribosomal subunit, although it is not seen to bind rRNA by itself. It is important during the early stages of 50S assembly. The protein is Large ribosomal subunit protein uL13 of Chlamydia trachomatis serovar A (strain ATCC VR-571B / DSM 19440 / HAR-13).